The following is a 20-amino-acid chain: Manganese peroxidase H5 (20 aa).

This sequence belongs to the peroxidase family. Ligninase subfamily.

The protein localises to the secreted. The catalysed reaction is 2 Mn(2+) + H2O2 + 2 H(+) = 2 Mn(3+) + 2 H2O. Functionally, catalyzes the oxidation of Mn(2+) to Mn(3+). The latter, acting as a diffusible redox mediator, is capable of oxidizing a variety of lignin compounds. This is Manganese peroxidase H5 from Phanerodontia chrysosporium (White-rot fungus).